Reading from the N-terminus, the 394-residue chain is 3-ketosteroid-9-alpha-monooxygenase, oxygenase component (394 aa).

Residues 27–129 (WHCLGLAKDF…TLDQDGLLFV (103 aa)) form the Rieske domain. Residues Cys68, His70, Cys87, and His90 each coordinate [2Fe-2S] cluster. Asn175, His181, and His186 together coordinate Fe cation. Residue Tyr245 participates in substrate binding. Asp305 is a binding site for Fe cation.

As to quaternary structure, homotrimer. The two-component system 3-ketosteroid-9-alpha-monooxygenase is composed of an oxygenase component KshA and a reductase component KshB. [2Fe-2S] cluster serves as cofactor. Fe cation is required as a cofactor.

It catalyses the reaction androsta-1,4-diene-3,17-dione + 2 reduced [2Fe-2S]-[ferredoxin] + O2 + 2 H(+) = 9alpha-hydroxyandrosta-1,4-diene-3,17-dione + 2 oxidized [2Fe-2S]-[ferredoxin] + H2O. In terms of biological role, may be involved in the degradation of cholic acid, a steroid acid found predominantly in the bile. In vitro, catalyzes the introduction of a 9alpha-hydroxyl moiety into the ring B of 3-ketosteroid substrates such as 1,4-androstadiene-3,17-dione (ADD), 4-androstene-3,17-dione (AD), 4-androstene-17beta-ol-3-one (testosterone), 4-pregnene-3,20-dione (progesterone), 3-oxo-23,24-bisnorcholesta-4-en-22-oate (4-BNC), 23,24-bisnorcholesta-4-ene-22-oate, 3-oxo-23,24-bisnorcholaesta-1,4-dien-22-oate (1,4-BNC), 23,24-bisnorcholesta-1,4-diene-22-oate and 3-oxo-23,24-bisnorcholesta-1,4-dien-22-oyl-coenzyme A thioester (1,4-BNC-CoA). KshA1 has the highest specificity for steroids possessing an isopropionyl side chain at C17. This chain is 3-ketosteroid-9-alpha-monooxygenase, oxygenase component, found in Rhodococcus rhodochrous.